Here is a 266-residue protein sequence, read N- to C-terminus: Glucosamine-6-phosphate deaminase (266 aa).

The Proton acceptor; for enolization step role is filled by Asp-72. The active-site For ring-opening step is the Asp-141. His-143 serves as the catalytic Proton acceptor; for ring-opening step. Glu-148 functions as the For ring-opening step in the catalytic mechanism.

Belongs to the glucosamine/galactosamine-6-phosphate isomerase family. NagB subfamily. Homohexamer.

The enzyme catalyses alpha-D-glucosamine 6-phosphate + H2O = beta-D-fructose 6-phosphate + NH4(+). The protein operates within amino-sugar metabolism; N-acetylneuraminate degradation; D-fructose 6-phosphate from N-acetylneuraminate: step 5/5. Allosterically activated by N-acetylglucosamine 6-phosphate (GlcNAc6P). Its function is as follows. Catalyzes the reversible isomerization-deamination of glucosamine 6-phosphate (GlcN6P) to form fructose 6-phosphate (Fru6P) and ammonium ion. The chain is Glucosamine-6-phosphate deaminase from Aliivibrio salmonicida (strain LFI1238) (Vibrio salmonicida (strain LFI1238)).